A 264-amino-acid polypeptide reads, in one-letter code: Thymidylate synthase (264 aa).

R21 provides a ligand contact to dUMP. Residue H51 participates in (6R)-5,10-methylene-5,6,7,8-tetrahydrofolate binding. Residue 126 to 127 (RR) participates in dUMP binding. C146 acts as the Nucleophile in catalysis. DUMP is bound by residues 166–169 (RSAD), N177, and 207–209 (HIY). Position 169 (D169) interacts with (6R)-5,10-methylene-5,6,7,8-tetrahydrofolate. S263 is a binding site for (6R)-5,10-methylene-5,6,7,8-tetrahydrofolate.

The protein belongs to the thymidylate synthase family. Bacterial-type ThyA subfamily. As to quaternary structure, homodimer.

The protein resides in the cytoplasm. It carries out the reaction dUMP + (6R)-5,10-methylene-5,6,7,8-tetrahydrofolate = 7,8-dihydrofolate + dTMP. The protein operates within pyrimidine metabolism; dTTP biosynthesis. Catalyzes the reductive methylation of 2'-deoxyuridine-5'-monophosphate (dUMP) to 2'-deoxythymidine-5'-monophosphate (dTMP) while utilizing 5,10-methylenetetrahydrofolate (mTHF) as the methyl donor and reductant in the reaction, yielding dihydrofolate (DHF) as a by-product. This enzymatic reaction provides an intracellular de novo source of dTMP, an essential precursor for DNA biosynthesis. The polypeptide is Thymidylate synthase (Halalkalibacterium halodurans (strain ATCC BAA-125 / DSM 18197 / FERM 7344 / JCM 9153 / C-125) (Bacillus halodurans)).